A 1181-amino-acid chain; its full sequence is 1-phosphatidylinositol 4,5-bisphosphate phosphodiesterase beta-2 (1181 aa).

The 152-residue stretch at 312–463 folds into the PI-PLC X-box domain; it reads QDMTQPLNHY…LRGKILIKNK (152 aa). The active site involves H327. N328, E357, and D359 together coordinate Ca(2+). The active site involves H374. Residue E408 coordinates Ca(2+). Residues 465 to 534 are disordered; that stretch reads NQFSGPASPS…EEIKKMQSDE (70 aa). A compositionally biased stretch (acidic residues) spans 503 to 525; it reads TEVEEEEVVEEEEEEESGNLDEE. One can recognise a PI-PLC Y-box domain in the interval 547–663; the sequence is MSSLVNYIQP…GYLLKHEFMR (117 aa). The region spanning 666–791 is the C2 domain; that stretch reads DKQFNPFSVD…CLRSESNMAL (126 aa). The tract at residues 847 to 890 is disordered; the sequence is SGTPVASQSNGAPVSAGNGSTAPGTKATGEEATKEVTEPQTASL. A compositionally biased stretch (polar residues) spans 850 to 869; that stretch reads PVASQSNGAPVSAGNGSTAP. The span at 874–883 shows a compositional bias: basic and acidic residues; the sequence is TGEEATKEVT. Positions 893-940 form a coiled coil; it reads LRELKGVVKLQRRHEKELRELERRGARRWEELLQRGAAQLAELQTQAA. S950 is modified (phosphoserine). 2 coiled-coil regions span residues 974–1026 and 1075–1141; these read PRVQ…AELK and HIQE…VRAY. The interval 1149–1181 is disordered; that stretch reads EAEDKPERSCEASEESCPQEPLVSKADTQESRL. Residues 1150–1159 are compositionally biased toward basic and acidic residues; that stretch reads AEDKPERSCE.

Interacts with RAC1. Forms a complex composed of at least WDR26, a G-beta:gamma unit, and PLCB2. Ca(2+) serves as cofactor.

It carries out the reaction a 1,2-diacyl-sn-glycero-3-phospho-(1D-myo-inositol-4,5-bisphosphate) + H2O = 1D-myo-inositol 1,4,5-trisphosphate + a 1,2-diacyl-sn-glycerol + H(+). It catalyses the reaction a 1,2-diacyl-sn-glycero-3-phospho-(1D-myo-inositol) + H2O = 1D-myo-inositol 1-phosphate + a 1,2-diacyl-sn-glycerol + H(+). The production of the second messenger molecules diacylglycerol (DAG) and inositol 1,4,5-trisphosphate (IP3) is mediated by activated phosphatidylinositol-specific phospholipase C enzymes. In neutrophils, participates in a phospholipase C-activating N-formyl peptide-activated GPCR (G protein-coupled receptor) signaling pathway by promoting RASGRP4 activation by DAG, to promote neutrophil functional responses. This chain is 1-phosphatidylinositol 4,5-bisphosphate phosphodiesterase beta-2, found in Mus musculus (Mouse).